We begin with the raw amino-acid sequence, 421 residues long: Subtilisin-like protease 2 (421 aa).

Positions 1–16 (MQLLNFGLLLLPFVAG) are cleaved as a signal peptide. Residues 17–122 (DLAPQPEPLL…VHPDQHVYLA (106 aa)) constitute a propeptide that is removed on maturation. One can recognise an Inhibitor I9 domain in the interval 36–122 (QYIVTLKEGL…VHPDQHVYLA (87 aa)). Residues 131-421 (RWGLGYMSSK…ERKFTLPKYY (291 aa)) enclose the Peptidase S8 domain. Residues D169 and H201 each act as charge relay system in the active site. N-linked (GlcNAc...) asparagine glycosylation is found at N248, N261, and N348. S357 acts as the Charge relay system in catalysis. A glycan (N-linked (GlcNAc...) asparagine) is linked at N388.

It belongs to the peptidase S8 family.

The protein localises to the secreted. Secreted subtilisin-like serine protease with keratinolytic activity that contributes to pathogenicity. The polypeptide is Subtilisin-like protease 2 (SUB2) (Arthroderma benhamiae (strain ATCC MYA-4681 / CBS 112371) (Trichophyton mentagrophytes)).